The following is a 790-amino-acid chain: MKITSTSCICPVLVCLCFVQRCYGTTHHGSIRGTRNQTKHIEGETEVHHRPKRGWVWNQFFVLEEHMGPDPQYVGKLHSNSDKGDGSVKYILTGEGAGTIFIIDDTTGDIHSTKSLDREQKTHYVLHAQAIDRRTNKPLEPESEFIIKVQDINDNAPKFTDGPYIVTVPEMSDMGTSVLQVTATDADDPTYGNSARVVYSILQGQPYFSVDPKTGVIRTALHNMDREAREHYSVVIQAKDMAGQVGGLSGSTTVNITLTDVNDNPPRFPQKHYQLYVPESAQVGSAVGKIKANDADTGSNADMTYSIINGDGVGIFSISTDKETREGILSLKKPLNYEKKKSYTLNIEGANTHLDFRFSHLGPFKDATMLKIIVGDVDEPPLFSMPSYVMEVYENAKIGTVVGTVLAQDPDSANSLVRYFIDYNAEDDRFFNIDANTGTIKTTKVLDREETPWYNITVAASENDNPSLLSHVTVGIRVLDVNDNPPELAREYDIVVCENSKPGQVIHTISATDKDDFANGPRFNFFLDEHLSINPNFTLKDNEDNTASILTRRRRFSRTIQDVYYLPIMISDGGIPSLSSSSTLTIRVCACERDGRVRTCHAEAFLSSAGLSTGALIAILLCVVILLAIVVLFITLRRSKKEPLIISEEDVRENVVTYDDEGGGEEDTEAFDITALRNPSAAEELKYRRDIRPEVKLTPRHQTLSTLESIDVQEFIKQRLAEADLDPSVPPYDSLQTYAYEGQRSEAGSISSLDSATTQSDQDYQYLGDWGPEFKTLAELYGEIESERTT.

The N-terminal stretch at M1–G24 is a signal peptide. The propeptide occupies T25–R53. The N-linked (GlcNAc...) asparagine glycan is linked to N36. 5 Cadherin domains span residues G54 to F159, T160 to F268, P269 to F383, S384 to P486, and E487 to S608. The Extracellular segment spans residues G54–S608. N-linked (GlcNAc...) asparagine glycosylation is present at N255. 2 N-linked (GlcNAc...) asparagine glycosylation sites follow: N455 and N536. A helical membrane pass occupies residues A609–L636. The Cytoplasmic portion of the chain corresponds to R637–T790. S786 bears the Phosphoserine mark.

The protein resides in the cell membrane. Functionally, cadherins are calcium-dependent cell adhesion proteins. They preferentially interact with themselves in a homophilic manner in connecting cells; cadherins may thus contribute to the sorting of heterogeneous cell types. The chain is Cadherin-18 (CDH18) from Bos taurus (Bovine).